The primary structure comprises 277 residues: Large ribosomal subunit protein uL2 (277 aa).

The tract at residues 199–277 (DHMNTSVGKA…ILISRHKRKK (79 aa)) is disordered. A compositionally biased stretch (basic residues) spans 209-220 (GRTRWMGRRPHN).

This sequence belongs to the universal ribosomal protein uL2 family. In terms of assembly, part of the 50S ribosomal subunit. Forms a bridge to the 30S subunit in the 70S ribosome.

Functionally, one of the primary rRNA binding proteins. Required for association of the 30S and 50S subunits to form the 70S ribosome, for tRNA binding and peptide bond formation. It has been suggested to have peptidyltransferase activity; this is somewhat controversial. Makes several contacts with the 16S rRNA in the 70S ribosome. The polypeptide is Large ribosomal subunit protein uL2 (Nitrobacter winogradskyi (strain ATCC 25391 / DSM 10237 / CIP 104748 / NCIMB 11846 / Nb-255)).